Reading from the N-terminus, the 444-residue chain is Ribosome biogenesis protein YTM1 (444 aa).

Residues 8–89 are ubiquitin-like (UBL) domain; the sequence is VKLRFFTREE…ETFLNVEYTR (82 aa). WD repeat units lie at residues 99–138, 140–178, 194–231, 269–309, 311–350, 357–397, and 408–444; these read SFDN…EKQY, GHSG…LKSI, GHKA…MTVI, SHSA…CVDT, TTSY…SSKI, GHKN…AMYT, and GVND…IFSN. The interval 99–444 is sufficient for interaction with ERB1 and association with 66S pre-ribosomes; that stretch reads SFDNEDWVSS…INKGDNIFSN (346 aa).

It belongs to the WD repeat WDR12/YTM1 family. In terms of assembly, component of the NOP7 complex, composed of ERB1, NOP7 and YTM1. The complex is held together by ERB1, which interacts with NOP7 via its N-terminal domain and with YTM1 via a high-affinity interaction between the seven-bladed beta-propeller domains of the 2 proteins. The NOP7 complex associates with the 66S pre-ribosome. Interacts (via UBL domain) with MDN1 (via VWFA/MIDAS domain).

It is found in the nucleus. The protein localises to the nucleolus. The protein resides in the nucleoplasm. Component of the NOP7 complex, which is required for maturation of the 25S and 5.8S ribosomal RNAs and formation of the 60S ribosome. The protein is Ribosome biogenesis protein YTM1 of Kluyveromyces lactis (strain ATCC 8585 / CBS 2359 / DSM 70799 / NBRC 1267 / NRRL Y-1140 / WM37) (Yeast).